A 326-amino-acid chain; its full sequence is Vacuolar protein sorting-associated protein 26A-B (326 aa).

It belongs to the VPS26 family. Component of the heterotrimeric retromer cargo-selective complex (CSC) which is believed to associate with variable sorting nexins to form functionally distinct retromer complex variants.

It localises to the cytoplasm. Its subcellular location is the endosome membrane. It is found in the early endosome. In terms of biological role, acts as a component of the retromer cargo-selective complex (CSC). The CSC is believed to be the core functional component of retromer or respective retromer complex variants acting to prevent missorting of selected transmembrane cargo proteins into the lysosomal degradation pathway. Retromer mediates retrograde transport of cargo proteins from endosomes to the trans-Golgi network (TGN). The protein is Vacuolar protein sorting-associated protein 26A-B (vps26a-b) of Xenopus laevis (African clawed frog).